The sequence spans 788 residues: Endonuclease MutS2 (788 aa).

334 to 341 (GPNTGGKT) lines the ATP pocket. In terms of domain architecture, Smr spans 713 to 788 (LDLRGQRYEE…GTGATIVYLQ (76 aa)).

Belongs to the DNA mismatch repair MutS family. MutS2 subfamily. As to quaternary structure, homodimer. Binds to stalled ribosomes, contacting rRNA.

Endonuclease that is involved in the suppression of homologous recombination and thus may have a key role in the control of bacterial genetic diversity. In terms of biological role, acts as a ribosome collision sensor, splitting the ribosome into its 2 subunits. Detects stalled/collided 70S ribosomes which it binds and splits by an ATP-hydrolysis driven conformational change. Acts upstream of the ribosome quality control system (RQC), a ribosome-associated complex that mediates the extraction of incompletely synthesized nascent chains from stalled ribosomes and their subsequent degradation. Probably generates substrates for RQC. The protein is Endonuclease MutS2 of Lactobacillus johnsonii (strain CNCM I-12250 / La1 / NCC 533).